A 648-amino-acid chain; its full sequence is Threonine--tRNA ligase (648 aa).

The region spanning 1-61 (MIKITFPNTS…NENASVKLYK (61 aa)) is the TGS domain. The segment at 243–542 (DHRRIGKEME…MIEHTGGKFP (300 aa)) is catalytic. 3 residues coordinate Zn(2+): cysteine 338, histidine 389, and histidine 519.

This sequence belongs to the class-II aminoacyl-tRNA synthetase family. As to quaternary structure, homodimer. The cofactor is Zn(2+).

It localises to the cytoplasm. It carries out the reaction tRNA(Thr) + L-threonine + ATP = L-threonyl-tRNA(Thr) + AMP + diphosphate + H(+). Functionally, catalyzes the attachment of threonine to tRNA(Thr) in a two-step reaction: L-threonine is first activated by ATP to form Thr-AMP and then transferred to the acceptor end of tRNA(Thr). Also edits incorrectly charged L-seryl-tRNA(Thr). This chain is Threonine--tRNA ligase, found in Azobacteroides pseudotrichonymphae genomovar. CFP2.